Here is a 124-residue protein sequence, read N- to C-terminus: Small ribosomal subunit protein uS13 (124 aa).

The tract at residues 95–124 (GLPVRGQRTKTNARTRKGPKRTIAGKKKAK) is disordered.

The protein belongs to the universal ribosomal protein uS13 family. Part of the 30S ribosomal subunit. Forms a loose heterodimer with protein S19. Forms two bridges to the 50S subunit in the 70S ribosome.

In terms of biological role, located at the top of the head of the 30S subunit, it contacts several helices of the 16S rRNA. In the 70S ribosome it contacts the 23S rRNA (bridge B1a) and protein L5 of the 50S subunit (bridge B1b), connecting the 2 subunits; these bridges are implicated in subunit movement. Contacts the tRNAs in the A and P-sites. The polypeptide is Small ribosomal subunit protein uS13 (Rhodococcus jostii (strain RHA1)).